Consider the following 768-residue polypeptide: DNA ligase (768 aa).

The span at 1-11 (MSPSAPANSAP) shows a compositional bias: low complexity. The segment at 1-28 (MSPSAPANSAPDPDRNGVPDVGPASAAP) is disordered. NAD(+)-binding positions include 62-66 (DAEYD), 111-112 (SI), and Glu-148. Lys-150 functions as the N6-AMP-lysine intermediate in the catalytic mechanism. Residues Arg-171, Glu-238, Lys-361, and Lys-385 each contribute to the NAD(+) site. The Zn(2+) site is built by Cys-484, Cys-487, Cys-502, and Cys-508. Residues 670–759 (AAELPLAGKT…EADADADAEG (90 aa)) form the BRCT domain.

The protein belongs to the NAD-dependent DNA ligase family. LigA subfamily. Mg(2+) serves as cofactor. Mn(2+) is required as a cofactor.

It catalyses the reaction NAD(+) + (deoxyribonucleotide)n-3'-hydroxyl + 5'-phospho-(deoxyribonucleotide)m = (deoxyribonucleotide)n+m + AMP + beta-nicotinamide D-nucleotide.. Functionally, DNA ligase that catalyzes the formation of phosphodiester linkages between 5'-phosphoryl and 3'-hydroxyl groups in double-stranded DNA using NAD as a coenzyme and as the energy source for the reaction. It is essential for DNA replication and repair of damaged DNA. The polypeptide is DNA ligase (Leptothrix cholodnii (strain ATCC 51168 / LMG 8142 / SP-6) (Leptothrix discophora (strain SP-6))).